The chain runs to 517 residues: Arp2/3 complex-activating protein rickA (517 aa).

2 disordered regions span residues 313–441 (LENN…SKPA) and 461–517 (KVSD…SFVR). Pro residues-rich tracts occupy residues 319–340 (PPSPLPENNIPSPPPPPPPSPL) and 347–378 (SSPPPPPPPPLPENNIPSPPPPPPPPPPPPMA). Residues 406-423 (DTSDLMREIAGPKKLKKV) form the WH2 domain. The segment at 444–477 (VNALSGLESIFARRAVIKVSDSSSSESDSGNWSD) is central and acidic domains. Residues 463–479 (SDSSSSESDSGNWSDVS) are compositionally biased toward low complexity. Polar residues predominate over residues 500–517 (THAQKINNRNSQNPSFVR).

Homodimer.

It localises to the cell surface. In terms of biological role, recruits and activates the Arp2/3 complex, which in turn leads to actin polymerization, promoting Rickettsia motility during infection. In Rickettsia conorii (strain ATCC VR-613 / Malish 7), this protein is Arp2/3 complex-activating protein rickA (rickA).